The sequence spans 69 residues: Large ribosomal subunit protein bL32c (69 aa).

The protein belongs to the bacterial ribosomal protein bL32 family.

The protein localises to the plastid. It localises to the chloroplast. The protein is Large ribosomal subunit protein bL32c (rpl32) of Anthoceros angustus (Hornwort).